Consider the following 171-residue polypeptide: UPF0398 protein M28_Spy1394 (171 aa).

The protein belongs to the UPF0398 family.

The polypeptide is UPF0398 protein M28_Spy1394 (Streptococcus pyogenes serotype M28 (strain MGAS6180)).